A 709-amino-acid chain; its full sequence is Cilia- and flagella-associated protein 91 (709 aa).

3 disordered regions span residues 94–116 (RAGA…QRTK), 333–360 (VEPQ…KPLR), and 690–709 (PAAA…ETKE).

It belongs to the CFAP91 family.

It localises to the cytoplasm. It is found in the cytoskeleton. The protein localises to the flagellum axoneme. Axoneme-associated protein involved in flagellum motility and central pair positioning. This is Cilia- and flagella-associated protein 91 (CFAP91) from Trypanosoma brucei brucei (strain 927/4 GUTat10.1).